Here is a 491-residue protein sequence, read N- to C-terminus: MATRVQPSVKVLGASFSQEANPFTAAVELTPMPMLITNPRLPDNPIIFANEAFQNLTGYEADEIIGKNCRFLQGPGTDPKHVEIIHSALEAEQSVEIDILNYKKSGEPFWNRLHISPVKTENGELHHFVSSQLDVTLELGKLVELEKERETLSIEKQRSSDQLQYIVEVANVGFWTRDYTTGEISCSAEYRRIFGLTPDEPVNYDKIIDMVVLEDRITLIQRSQESFATGKSFRVEYRITNRLGQVRWVETRAKALLGKSPALLGIVIDVTERKKAEADKALVTREISHRFKNSMAMVQSIANQTLRNATDPQTANELFSERLRALSQAHDMLLREDWTGTTISQICETALAPFNSTFGHRIRTSGPELVVSDRVTVSLSLGLYELATNAVKYGALSNENGTVQFSWDVLERQGERKFHMRWVEDGGPAVERPTRRGFGQRLLYSVLTGELRAKCDINFAPDGLVIDVLAPMTADVFPQLDSLSDTQAEPV.

A PAS 1 domain is found at 19–92; it reads EANPFTAAVE…EIIHSALEAE (74 aa). C69 carries the S-4a-FMN cysteine modification. Positions 93–147 constitute a PAC domain; the sequence is QSVEIDILNYKKSGEPFWNRLHISPVKTENGELHHFVSSQLDVTLELGKLVELEK. Positions 159 to 230 constitute a PAS 2 domain; sequence SSDQLQYIVE…QRSQESFATG (72 aa). The segment at 286-368 is HWE histidine kinase domain; it reads EISHRFKNSM…GHRIRTSGPE (83 aa). H289 carries the post-translational modification Phosphohistidine; by autocatalysis.

FMN binds covalently to cysteine after exposure to blue light and this bond is spontaneously broken in the dark.

The catalysed reaction is ATP + protein L-histidine = ADP + protein N-phospho-L-histidine.. Photosensitive kinase that is involved in increased bacterial virulence upon exposure to light. This is Blue-light-activated histidine kinase from Brucella anthropi (strain ATCC 49188 / DSM 6882 / CCUG 24695 / JCM 21032 / LMG 3331 / NBRC 15819 / NCTC 12168 / Alc 37) (Ochrobactrum anthropi).